Reading from the N-terminus, the 251-residue chain is Elongation factor Ts (251 aa).

The tract at residues 82-85 (TDFV) is involved in Mg(2+) ion dislocation from EF-Tu. The disordered stretch occupies residues 215–251 (QMGQKAPEPVAAAPQVEEKAPEPAAKDNPPAKGKKKK). Positions 219–229 (KAPEPVAAAPQ) are enriched in low complexity. Basic and acidic residues predominate over residues 230-239 (VEEKAPEPAA).

It belongs to the EF-Ts family.

It localises to the cytoplasm. In terms of biological role, associates with the EF-Tu.GDP complex and induces the exchange of GDP to GTP. It remains bound to the aminoacyl-tRNA.EF-Tu.GTP complex up to the GTP hydrolysis stage on the ribosome. The polypeptide is Elongation factor Ts (Microcystis aeruginosa (strain NIES-843 / IAM M-2473)).